The following is a 450-amino-acid chain: Phosphoglucosamine mutase (450 aa).

The active-site Phosphoserine intermediate is Ser97. Mg(2+) contacts are provided by Ser97, Asp236, Asp238, and Asp240. Ser97 is modified (phosphoserine).

The protein belongs to the phosphohexose mutase family. The cofactor is Mg(2+). In terms of processing, activated by phosphorylation.

The enzyme catalyses alpha-D-glucosamine 1-phosphate = D-glucosamine 6-phosphate. Its function is as follows. Catalyzes the conversion of glucosamine-6-phosphate to glucosamine-1-phosphate. This chain is Phosphoglucosamine mutase, found in Prochlorococcus marinus (strain AS9601).